We begin with the raw amino-acid sequence, 221 residues long: UPF0502 protein XOO0224 (221 aa).

Belongs to the UPF0502 family.

The protein is UPF0502 protein XOO0224 of Xanthomonas oryzae pv. oryzae (strain MAFF 311018).